We begin with the raw amino-acid sequence, 198 residues long: dTTP/UTP pyrophosphatase (198 aa).

D75 acts as the Proton acceptor in catalysis.

Belongs to the Maf family. YhdE subfamily. A divalent metal cation is required as a cofactor.

The protein localises to the cytoplasm. It catalyses the reaction dTTP + H2O = dTMP + diphosphate + H(+). The enzyme catalyses UTP + H2O = UMP + diphosphate + H(+). Nucleoside triphosphate pyrophosphatase that hydrolyzes dTTP and UTP. May have a dual role in cell division arrest and in preventing the incorporation of modified nucleotides into cellular nucleic acids. The polypeptide is dTTP/UTP pyrophosphatase (Wolbachia pipientis wMel).